A 447-amino-acid polypeptide reads, in one-letter code: Acetylornithine deacetylase (447 aa).

H103 provides a ligand contact to Zn(2+). Residue D105 is part of the active site. Residue D135 participates in Zn(2+) binding. E169 functions as the Proton acceptor in the catalytic mechanism. Residues E170 and H419 each contribute to the Zn(2+) site.

Belongs to the peptidase M20A family. ArgE subfamily. Homodimer. The cofactor is Zn(2+). Co(2+) serves as cofactor.

The catalysed reaction is N(2)-acetyl-L-ornithine + H2O = L-ornithine + acetate. Its pathway is amino-acid biosynthesis; L-arginine biosynthesis; L-ornithine from N(2)-acetyl-L-ornithine (linear): step 1/1. The protein is Acetylornithine deacetylase (argE) of Dictyostelium discoideum (Social amoeba).